A 517-amino-acid polypeptide reads, in one-letter code: Crotonobetaine/carnitine--CoA ligase (517 aa).

Belongs to the ATP-dependent AMP-binding enzyme family.

It carries out the reaction 4-(trimethylamino)butanoate + ATP + CoA = 4-(trimethylamino)butanoyl-CoA + AMP + diphosphate. The enzyme catalyses crotonobetaine + ATP + CoA = crotonobetainyl-CoA + AMP + diphosphate. It catalyses the reaction (R)-carnitine + ATP + CoA = (R)-carnitinyl-CoA + AMP + diphosphate. The protein operates within amine and polyamine metabolism; carnitine metabolism. Catalyzes the transfer of CoA to carnitine, generating the initial carnitinyl-CoA needed for the CaiB reaction cycle. Also has activity toward crotonobetaine and gamma-butyrobetaine. This Escherichia coli O1:K1 / APEC protein is Crotonobetaine/carnitine--CoA ligase.